A 256-amino-acid polypeptide reads, in one-letter code: UPF0246 protein Sbal_1048 (256 aa).

The protein belongs to the UPF0246 family.

In Shewanella baltica (strain OS155 / ATCC BAA-1091), this protein is UPF0246 protein Sbal_1048.